The chain runs to 176 residues: NAD(P)H-quinone oxidoreductase subunit I, chloroplastic (176 aa).

2 4Fe-4S ferredoxin-type domains span residues 55-84 (GRIH…VNWE) and 95-124 (QTYS…MTEE). Residues cysteine 64, cysteine 67, cysteine 70, cysteine 74, cysteine 104, cysteine 107, cysteine 110, and cysteine 114 each coordinate [4Fe-4S] cluster.

Belongs to the complex I 23 kDa subunit family. As to quaternary structure, NDH is composed of at least 16 different subunits, 5 of which are encoded in the nucleus. The cofactor is [4Fe-4S] cluster.

It is found in the plastid. The protein localises to the chloroplast thylakoid membrane. It catalyses the reaction a plastoquinone + NADH + (n+1) H(+)(in) = a plastoquinol + NAD(+) + n H(+)(out). It carries out the reaction a plastoquinone + NADPH + (n+1) H(+)(in) = a plastoquinol + NADP(+) + n H(+)(out). Its function is as follows. NDH shuttles electrons from NAD(P)H:plastoquinone, via FMN and iron-sulfur (Fe-S) centers, to quinones in the photosynthetic chain and possibly in a chloroplast respiratory chain. The immediate electron acceptor for the enzyme in this species is believed to be plastoquinone. Couples the redox reaction to proton translocation, and thus conserves the redox energy in a proton gradient. The chain is NAD(P)H-quinone oxidoreductase subunit I, chloroplastic from Mesostigma viride (Green alga).